The following is a 690-amino-acid chain: Protein arginine N-methyltransferase 7 (690 aa).

SAM-dependent MTase PRMT-type domains follow at residues 14–357 and 366–690; these read QNSW…YSLW and TKSV…QKKL.

This sequence belongs to the class I-like SAM-binding methyltransferase superfamily. Protein arginine N-methyltransferase family. PRMT7 subfamily.

Functionally, essential arginine methyltransferase that can both catalyze the formation of omega-N monomethylarginine (MMA) and symmetrical dimethylarginine (sDMA). Specifically mediates the symmetrical dimethylation of arginine residues in the small nuclear ribonucleoproteins SmD1 and SmD3. This is Protein arginine N-methyltransferase 7 (Art7) from Drosophila erecta (Fruit fly).